Consider the following 464-residue polypeptide: Phosphoglucosamine mutase (464 aa).

Ser112 (phosphoserine intermediate) is an active-site residue. Positions 112, 252, 254, and 256 each coordinate Mg(2+). A Phosphoserine modification is found at Ser112.

It belongs to the phosphohexose mutase family. It depends on Mg(2+) as a cofactor. In terms of processing, activated by phosphorylation.

It catalyses the reaction alpha-D-glucosamine 1-phosphate = D-glucosamine 6-phosphate. Its function is as follows. Catalyzes the conversion of glucosamine-6-phosphate to glucosamine-1-phosphate. The polypeptide is Phosphoglucosamine mutase (Synechococcus sp. (strain CC9605)).